The chain runs to 193 residues: Xanthine phosphoribosyltransferase (193 aa).

Positions 20 and 27 each coordinate xanthine. Ala-128–Ala-132 provides a ligand contact to 5-phospho-alpha-D-ribose 1-diphosphate. Lys-156 is a xanthine binding site.

Belongs to the purine/pyrimidine phosphoribosyltransferase family. Xpt subfamily. Homodimer.

The protein localises to the cytoplasm. It catalyses the reaction XMP + diphosphate = xanthine + 5-phospho-alpha-D-ribose 1-diphosphate. It participates in purine metabolism; XMP biosynthesis via salvage pathway; XMP from xanthine: step 1/1. Converts the preformed base xanthine, a product of nucleic acid breakdown, to xanthosine 5'-monophosphate (XMP), so it can be reused for RNA or DNA synthesis. The chain is Xanthine phosphoribosyltransferase from Streptococcus gordonii (strain Challis / ATCC 35105 / BCRC 15272 / CH1 / DL1 / V288).